A 417-amino-acid chain; its full sequence is FAD-dependent monooxygenase aptC (417 aa).

A signal peptide spans 1-18; it reads MTLPVLIIGAGLSGLTTA. 5 residues coordinate FAD: glutamate 32, alanine 43, arginine 117, aspartate 332, and glycine 345.

Belongs to the paxM FAD-dependent monooxygenase family. Requires FAD as cofactor.

It carries out the reaction 3,6,8,9-tetrahydroxy-1-oxo-3-(2-oxopropyl)-1,2,3,4-tetrahydroanthracene-2-carboxyl-[ACP] + NADPH + O2 + H(+) = 2,3,6,8,9-pentahydroxy-1-oxo-3-(2-oxopropyl)-1,2,3,4-tetrahydroanthracene-2-carboxyl-[ACP] + NADP(+) + H2O. It functions in the pathway secondary metabolite biosynthesis. FAD-dependent monooxygenase; part of the gene cluster that mediates the biosynthesis of asperthecin, an anthraquinone pigment. Polyketide synthase (PKS) aptA catalyzes the formation of the aromatic polyketide from acetyl coenzyme A and seven malonyl coenzyme A molecules. Polyketide is subsequently hydrolyzed by the action of the hydrolase aptB into endocrocin-9-anthrone. Endocrocin-9-anthrone is then oxidized into endocrocin by the monooxygenase aptC. Endocrocin is likely to decarboxylate spontaneously to form emodin which explains why there is no decarboxylase in the asperthecin biosynthesis cluster. Finally, aptC or another endogenous oxygenase catalyzes additional oxidation steps to form asperthecin. The sequence is that of FAD-dependent monooxygenase aptC from Emericella nidulans (strain FGSC A4 / ATCC 38163 / CBS 112.46 / NRRL 194 / M139) (Aspergillus nidulans).